The primary structure comprises 135 residues: uncharacterized protein (135 aa).

Transmembrane regions (helical) follow at residues 20 to 40 (IFSF…NTKL) and 47 to 67 (IAYF…IHGT).

Belongs to the plectrovirus ORF5 family.

It localises to the host membrane. This is an uncharacterized protein from Spiroplasma virus SpV1-C74 (SpV1).